The following is a 38-amino-acid chain: Cytochrome b6-f complex subunit 5 (38 aa).

The chain crosses the membrane as a helical span at residues 5–25 (LLLGIVLGLIPITLAGLFVAA).

This sequence belongs to the PetG family. As to quaternary structure, the 4 large subunits of the cytochrome b6-f complex are cytochrome b6, subunit IV (17 kDa polypeptide, PetD), cytochrome f and the Rieske protein, while the 4 small subunits are PetG, PetL, PetM and PetN. The complex functions as a dimer.

The protein resides in the cellular thylakoid membrane. In terms of biological role, component of the cytochrome b6-f complex, which mediates electron transfer between photosystem II (PSII) and photosystem I (PSI), cyclic electron flow around PSI, and state transitions. PetG is required for either the stability or assembly of the cytochrome b6-f complex. The sequence is that of Cytochrome b6-f complex subunit 5 from Crocosphaera subtropica (strain ATCC 51142 / BH68) (Cyanothece sp. (strain ATCC 51142)).